The primary structure comprises 569 residues: Adenine deaminase 1 (569 aa).

It belongs to the metallo-dependent hydrolases superfamily. Adenine deaminase family. The cofactor is Mn(2+).

It catalyses the reaction adenine + H2O + H(+) = hypoxanthine + NH4(+). This Rhizobium johnstonii (strain DSM 114642 / LMG 32736 / 3841) (Rhizobium leguminosarum bv. viciae) protein is Adenine deaminase 1.